We begin with the raw amino-acid sequence, 343 residues long: Programmed cell death protein 2 (343 aa).

Zn(2+)-binding residues include Cys134, Cys137, Cys145, Cys148, Cys154, His158, His167, and Cys171. An MYND-type; atypical zinc finger spans residues 134–171 (CRVCGCLAPMTCSRCKQAHYCSKEHQTLDWRLGHKQAC).

Ubiquitinated by PRKN, promoting proteasomal degradation.

It localises to the nucleus. Its function is as follows. May be a DNA-binding protein with a regulatory function. May play an important role in cell death and/or in regulation of cell proliferation. In Mus musculus (Mouse), this protein is Programmed cell death protein 2 (Pdcd2).